The sequence spans 275 residues: Large ribosomal subunit protein uL2cz (275 aa).

Disordered regions lie at residues 1 to 22 and 226 to 275; these read MAIH…DSQV and NPVD…RRRK.

It belongs to the universal ribosomal protein uL2 family. As to quaternary structure, part of the 50S ribosomal subunit.

It localises to the plastid. The protein localises to the chloroplast. The chain is Large ribosomal subunit protein uL2cz (rpl2-A) from Chloranthus spicatus (Chulantree).